The primary structure comprises 444 residues: D(2) dopamine receptor (444 aa).

Over 1–37 the chain is Extracellular; the sequence is MDPLNLSWYDDDLERQNWSRPFNGSEGKADRPHYNYY. Residues asparagine 5, asparagine 17, and asparagine 23 are each glycosylated (N-linked (GlcNAc...) asparagine). The helical transmembrane segment at 38–60 threads the bilayer; sequence AMLLTLLIFIIVFGNVLVCMAVS. Topologically, residues 61–70 are cytoplasmic; the sequence is REKALQTTTN. A helical transmembrane segment spans residues 71-93; sequence YLIVSLAVADLLVATLVMPWVVY. At 94–108 the chain is on the extracellular side; sequence LEVVGEWKFSRIHCD. Cysteine 107 and cysteine 182 are joined by a disulfide. Residues 109–130 form a helical membrane-spanning segment; the sequence is IFVTLDVMMCTASILNLCAISI. The Cytoplasmic segment spans residues 131–151; the sequence is DRYTAVAMPMLYNTRYSSKRR. A helical transmembrane segment spans residues 152-172; it reads VTVMIAIVWVLSFTISCPLLF. Over 173-188 the chain is Extracellular; the sequence is GLNNTDQNECIIANPA. The helical transmembrane segment at 189–213 threads the bilayer; sequence FVVYSSIVSFYVPFIVTLLVYIKIY. An interaction with PPP1R9B region spans residues 211–374; that stretch reads KIYIVLRKRR…SQQKEKKATQ (164 aa). Topologically, residues 214–374 are cytoplasmic; the sequence is IVLRKRRKRV…SQQKEKKATQ (161 aa). The tract at residues 282-329 is disordered; sequence EMLSSTSPPERTRYSPIPPSHHQLTLPDPSHHGLHSNPDSPAKPEKNG. A helical membrane pass occupies residues 375-396; sequence MLAIVLGVFIICWLPFFITHIL. Residues 397–410 lie on the Extracellular side of the membrane; that stretch reads NIHCDCNIPPVLYS. Cysteine 400 and cysteine 402 are oxidised to a cystine. The chain crosses the membrane as a helical span at residues 411–432; the sequence is AFTWLGYVNSAVNPIIYTTFNI. At 433–444 the chain is on the cytoplasmic side; that stretch reads EFRKAFMKILHC. The S-palmitoyl cysteine moiety is linked to residue cysteine 444.

The protein belongs to the G-protein coupled receptor 1 family. Forms homo- and heterooligomers with DRD4. The interaction with DRD4 may modulate agonist-induced downstream signaling. Interacts with CADPS and CADPS2. Interacts with GPRASP1, PPP1R9B and CLIC6. Interacts with ARRB2. Interacts with HTR2A. Interacts with DRD1. Interacts with KCNA2. In terms of processing, palmitoylated. Palmitoylation which is required for proper localization to the plasma membrane and stability of the receptor could be carried on by ZDHHC4, ZDHHC3 and ZDHHC8. In terms of tissue distribution, expressed in the anterior lobe of the pituitary gland. Expressed ventral tegmental area of the midbrain and the pars compacta of the substantia nigra. Expressed seven times more than isoform short in the caudate nucleus. As to expression, expressed in the anterior lobe of the pituitary gland. Expressed in the caudate nucleus. Not expressed in the wider brain.

It is found in the cell membrane. Its subcellular location is the golgi apparatus membrane. Functionally, dopamine receptor whose activity is mediated by G proteins which inhibit adenylyl cyclase. Positively regulates postnatal regression of retinal hyaloid vessels via suppression of VEGFR2/KDR activity, downstream of OPN5. The sequence is that of D(2) dopamine receptor (Drd2) from Rattus norvegicus (Rat).